Reading from the N-terminus, the 456-residue chain is F-box/FBD/LRR-repeat protein At3g52680 (456 aa).

An F-box domain is found at 20-73 (KDRISELPDGLLLKILSSLPTNIVVATSVLSKQWRSLWKLVPNLEFDSDDYESE). LRR repeat units lie at residues 74–100 (HYTF…RLKF), 102–127 (NFNP…VLDF), 152–179 (TLKL…HLEF), 180–205 (VRYK…RLYR), 225–252 (TIHD…LIEE), 270–295 (IAEV…LLNL), and 318–344 (TREA…KLTD). One can recognise an FBD domain in the interval 358-409 (KWNEPKDVPECLLSQLETFVWRRFDWGREEEKEIATYILKNGRRLKKATFST).

The sequence is that of F-box/FBD/LRR-repeat protein At3g52680 from Arabidopsis thaliana (Mouse-ear cress).